Here is a 281-residue protein sequence, read N- to C-terminus: 3-hydroxyanthranilate 3,4-dioxygenase (281 aa).

Positions 1–162 (MAGVTAIEIP…SNEFKTGKPG (162 aa)) are domain A (catalytic). R45 is an O2 binding site. Positions 49, 55, and 93 each coordinate Fe cation. E55 is a binding site for substrate. Residues R97 and E107 each coordinate substrate. The segment at 163-179 (KGTFACNAPYEARWTDL) is linker. The segment at 180–281 (PVPINRKEFI…GFAITIRMPG (102 aa)) is domain B.

It belongs to the 3-HAO family. Requires Fe(2+) as cofactor.

It is found in the cytoplasm. The catalysed reaction is 3-hydroxyanthranilate + O2 = (2Z,4Z)-2-amino-3-carboxymuconate 6-semialdehyde. It participates in cofactor biosynthesis; NAD(+) biosynthesis; quinolinate from L-kynurenine: step 3/3. Its function is as follows. Catalyzes the oxidative ring opening of 3-hydroxyanthranilate to 2-amino-3-carboxymuconate semialdehyde, which spontaneously cyclizes to quinolinate. The chain is 3-hydroxyanthranilate 3,4-dioxygenase (haao-1) from Caenorhabditis briggsae.